A 331-amino-acid chain; its full sequence is 6-phosphogluconolactonase (331 aa).

Lysine 287 is subject to N6-acetyllysine.

It belongs to the cycloisomerase 2 family.

The catalysed reaction is 6-phospho-D-glucono-1,5-lactone + H2O = 6-phospho-D-gluconate + H(+). The protein operates within carbohydrate degradation; pentose phosphate pathway; D-ribulose 5-phosphate from D-glucose 6-phosphate (oxidative stage): step 2/3. In terms of biological role, catalyzes the hydrolysis of 6-phosphogluconolactone to 6-phosphogluconate. The chain is 6-phosphogluconolactonase from Escherichia coli (strain SMS-3-5 / SECEC).